The sequence spans 586 residues: Regulatory protein NPR3 (586 aa).

The residue at position 10 (serine 10) is a Phosphoserine. In terms of domain architecture, BTB spans 60-135 (SDAEIIVDGV…IYTGRLKPFP (76 aa)). The segment at 138 to 152 (VSTCVDPVCSHDCCR) adopts a C2HC NPR-type zinc-finger fold. Cysteine 141, cysteine 146, histidine 148, and cysteine 151 together coordinate Zn(2+). 3 ANK repeats span residues 261–291 (ERIG…TLDQ), 293–320 (NGLH…DVNY), and 324–353 (RGYT…NASE). The salicylic acid-binding core (SBC) stretch occupies residues 383–523 (ESSKARLCID…MAEYIDDDIL (141 aa)). Arginine 428 serves as a coordination point for salicylate. Residues 554–586 (YSKDKESKIARSCLSASSSPSSSSIRDDLHNTT) form a disordered region. A compositionally biased stretch (low complexity) spans 565–577 (SCLSASSSPSSSS).

This sequence belongs to the plant 'ANKYRIN-BTB/POZ' family. 'NPR1-like' subfamily. As to quaternary structure, forms homodimers and heterodimers with NPR4 in the presence of salicylic acid (SA). Interacts with TGA2, TGA3, TGA5 and TGA6. Interacts with CUL3A, a core component of the cullin-RING ubiquitin ligases (CRL). Interacts with TGA2 in vivo in the nucleus. Binds to NPR1; this interaction is promoted by association with SA, probably due to conformational changes.

The protein localises to the nucleus. The protein operates within protein modification; protein ubiquitination. Salicylic acid (SA)-binding substrate-specific adapter of an E3 ubiquitin-protein ligase complex (CUL3-RBX1-BTB) which mediates the ubiquitination and subsequent proteasomal degradation of NPR1 in response to SA. Together with NPR4, acts as receptor of salicylic acid to monitor immunity in a NPR1-dependent manner and induce systemic acquired resistance (SAR). Involved in the regulation of basal defense responses against pathogens, and may be implicated in the cross-talk between the SA- and JA-dependent signaling pathways. In Arabidopsis thaliana (Mouse-ear cress), this protein is Regulatory protein NPR3.